The primary structure comprises 753 residues: MALNSEVMFREQINAMRSQAGRKRATSLQSFCSGNTDDSSADSTDNMDMMVDYPQQKGVSCMRARFNSESTLSKSFRKKVKKLAQKDRRSKERLNGNSEEDAIEVPRGAPSTYAAPSKLRKSKALDCLVSEKPKDEGRSEDSGHGADIEMAKGHFNDVRMKVFAARTAMQVEPALVMKTRKALEMKNAVLENHQSPGAFSLHAAYKIAASAESRVGSITPCNKKVTKEAMANLIRSSYDDTEITQELLFSSKFDSKWKGRYTDIYMRRDENGKKPKRPVNGQGWVMPLKSICEKFGINSTFFTNHRIDLKSARDQVLLMRLLSHDQTSTWISDIHPEAVKNETLAEYLLRELDASTMQKRVQAFKANVLADRDRVRVAGQFYNNIRIGKRMFGAARKAKYLSTIIGGMERRFEILENSVNHIPFTHSASDNNQEKCRNPRVHCRDSTRIALQFPRGQYLGDFIHANRISGKPLFNEFIMTQAPMKNTVDDFWRMVWQEEVPYIVMLTSRKEPERCEYYWPKSPSDPAVTVPGGLRIENFGVYQAPDPLFRVTHLRLIGPDREERHVEHWQGDVNNSSNMYSPLNILRLLRNASKPVVIHDHLGVSRAACLVAAEIAICSLLRGPTYKYPVQRAVQFLRQRRPFSIETPMQYIFVHRLVAFFFRDVIGSAKELDVDYERWLQERSERMFLDDLAAPIPGYRLLSPRADPDIVRMVGRPERPNYRREAPDCVGEMPNKVAAVDGILSPAKSVFEF.

Disordered regions lie at residues 26–46 (TSLQ…STDN) and 77–116 (RKKV…YAAP). Over residues 35–46 (NTDDSSADSTDN) the composition is skewed to low complexity. Basic and acidic residues predominate over residues 84–94 (AQKDRRSKERL). The Tyrosine-protein phosphatase domain occupies 408-661 (MERRFEILEN…IFVHRLVAFF (254 aa)).

It belongs to the protein-tyrosine phosphatase family. In terms of assembly, part of a complex, consisting of pseudophosphatases egg-3, egg-4, egg-5 and kinase mbk-2; this complex is required for the oocyte-to-zygote transition. Interacts (via tyrosine-protein phosphatase domain) with kinase mbk-2 (via 'Tyr-619' and 'Tyr-621'); mbk-2 tyrosine phosphorylation enhances the interaction.

It localises to the cytoplasm. The protein localises to the cell cortex. Functionally, inactive phosphatase which acts redundantly with egg-4 in the oocyte-to-zygote transition. Required for polarized cortical actin cytoskeleton rearrangement in the oocyte before and after fertilization. Together with egg-4, required for the cortical localization of kinase mbk-2 in maturing oocyte until the end of meiosis I. Also required for kinase mbk-2, pseudophosphatase egg-3 and chitin synthase chs-1 localization to cytoplasmic foci after fertilization. In Caenorhabditis elegans, this protein is Inactive protein-tyrosine phosphatase egg-5.